We begin with the raw amino-acid sequence, 255 residues long: 5-oxoprolinase subunit A (255 aa).

It belongs to the LamB/PxpA family. As to quaternary structure, forms a complex composed of PxpA, PxpB and PxpC.

The catalysed reaction is 5-oxo-L-proline + ATP + 2 H2O = L-glutamate + ADP + phosphate + H(+). In terms of biological role, catalyzes the cleavage of 5-oxoproline to form L-glutamate coupled to the hydrolysis of ATP to ADP and inorganic phosphate. This is 5-oxoprolinase subunit A from Campylobacter jejuni subsp. jejuni serotype O:2 (strain ATCC 700819 / NCTC 11168).